A 404-amino-acid chain; its full sequence is Cysteine desulfurase IscS (404 aa).

Residues 75-76 (AT), asparagine 155, glutamine 183, and 203-205 (SAH) contribute to the pyridoxal 5'-phosphate site. Lysine 206 carries the post-translational modification N6-(pyridoxal phosphate)lysine. Threonine 243 contacts pyridoxal 5'-phosphate. The active-site Cysteine persulfide intermediate is cysteine 328. Cysteine 328 contacts [2Fe-2S] cluster.

The protein belongs to the class-V pyridoxal-phosphate-dependent aminotransferase family. NifS/IscS subfamily. Homodimer. Forms a heterotetramer with IscU, interacts with other sulfur acceptors. Pyridoxal 5'-phosphate serves as cofactor.

Its subcellular location is the cytoplasm. The catalysed reaction is (sulfur carrier)-H + L-cysteine = (sulfur carrier)-SH + L-alanine. It functions in the pathway cofactor biosynthesis; iron-sulfur cluster biosynthesis. In terms of biological role, master enzyme that delivers sulfur to a number of partners involved in Fe-S cluster assembly, tRNA modification or cofactor biosynthesis. Catalyzes the removal of elemental sulfur atoms from cysteine to produce alanine. Functions as a sulfur delivery protein for Fe-S cluster synthesis onto IscU, an Fe-S scaffold assembly protein, as well as other S acceptor proteins. The polypeptide is Cysteine desulfurase IscS (Vibrio cholerae serotype O1 (strain ATCC 39541 / Classical Ogawa 395 / O395)).